The chain runs to 217 residues: Protein-L-isoaspartate O-methyltransferase 2 (217 aa).

Residue S62 is part of the active site.

Belongs to the methyltransferase superfamily. L-isoaspartyl/D-aspartyl protein methyltransferase family.

The protein resides in the cytoplasm. It catalyses the reaction [protein]-L-isoaspartate + S-adenosyl-L-methionine = [protein]-L-isoaspartate alpha-methyl ester + S-adenosyl-L-homocysteine. Its function is as follows. Catalyzes the methyl esterification of L-isoaspartyl residues in peptides and proteins that result from spontaneous decomposition of normal L-aspartyl and L-asparaginyl residues. It plays a role in the repair and/or degradation of damaged proteins. The polypeptide is Protein-L-isoaspartate O-methyltransferase 2 (Geotalea uraniireducens (strain Rf4) (Geobacter uraniireducens)).